We begin with the raw amino-acid sequence, 411 residues long: Putative ion-transport protein YfeO (411 aa).

11 helical membrane passes run 9–29 (MLLL…VLIA), 54–74 (DSPF…GLII), 99–119 (ALPG…SLGP), 149–169 (ILAS…AALI), 186–206 (LFAP…FFHP), 223–243 (IASG…AVWC), 258–278 (VLIL…GGPL), 296–316 (LGAG…VIAA), 322–342 (GGRI…LHAH), 343–363 (VEAV…VLVV), and 386–406 (LLCI…LLAA).

This sequence belongs to the chloride channel (TC 2.A.49) family.

The protein localises to the cell membrane. The protein is Putative ion-transport protein YfeO of Salmonella paratyphi A (strain ATCC 9150 / SARB42).